The following is a 1325-amino-acid chain: Lysine-specific demethylase 3A (1325 aa).

Disordered regions lie at residues 249 to 284 (SKRI…QGHV), 300 to 333 (PANK…RRSV), and 372 to 399 (QNGK…TGLK). Residues 274-283 (SPEVSQSQGH) show a composition bias toward polar residues. Positions 378-390 (SLISSRSSSLSDS) are enriched in low complexity. The C6-type zinc finger occupies 669–694 (CDVCDTTIFNLRWVCSKCGFGVCVDC). 2 disordered regions span residues 772-791 (TLKE…SLQQ) and 798-819 (PQLP…TASV). An LXXLL motif motif is present at residues 888 to 892 (LRNLL). The JmjC domain occupies 1062 to 1285 (MPSRFDDLMK…HCFWLTQEFR (224 aa)). Residues His-1124, Asp-1126, and His-1253 each coordinate Fe cation.

The protein belongs to the JHDM2 histone demethylase family. Requires Fe(2+) as cofactor.

It is found in the cytoplasm. The protein localises to the nucleus. It carries out the reaction N(6),N(6)-dimethyl-L-lysyl(9)-[histone H3] + 2 2-oxoglutarate + 2 O2 = L-lysyl(9)-[histone H3] + 2 formaldehyde + 2 succinate + 2 CO2. Functionally, histone demethylase that specifically demethylates 'Lys-9' of histone H3, thereby playing a central role in histone code. Preferentially demethylates mono- and dimethylated H3 'Lys-9' residue, with a preference for dimethylated residue, while it has weak or no activity on trimethylated H3 'Lys-9'. Demethylation of Lys residue generates formaldehyde and succinate. The chain is Lysine-specific demethylase 3A (KDM3A) from Gallus gallus (Chicken).